Consider the following 270-residue polypeptide: HTH-type transcriptional activator AllS (270 aa).

The HTH lysR-type domain maps to 4-61 (LDPETLRTFVSVAETGSFSRAAEKLYKTTATISYRIKLLEDNTGVALFSRTTRSVLLT). The segment at residues 21-40 (FSRAAEKLYKTTATISYRIK) is a DNA-binding region (H-T-H motif).

It belongs to the LysR transcriptional regulatory family.

Its function is as follows. Positive regulator essential for the expression of allD operon. Binds to the allD promoter. The chain is HTH-type transcriptional activator AllS (allS) from Klebsiella pneumoniae.